We begin with the raw amino-acid sequence, 535 residues long: F-box protein At1g56610 (535 aa).

3 consecutive transmembrane segments (helical) span residues 3–23 (FALV…SSSI), 37–57 (VLLL…LCLF), and 82–102 (LAPH…SLLF). Positions 73–119 (TELCDLPKCLAPHILSWLPTKTAVTVSLLFMKGWWRSEMKNLSSLKF) constitute an F-box; degenerate domain.

As to quaternary structure, part of a SCF (ASK-cullin-F-box) protein ligase complex. Interacts with ASK4.

It localises to the membrane. The protein operates within protein modification; protein ubiquitination. Component of SCF(ASK-cullin-F-box) E3 ubiquitin ligase complexes, which may mediate the ubiquitination and subsequent proteasomal degradation of target proteins. This chain is F-box protein At1g56610, found in Arabidopsis thaliana (Mouse-ear cress).